We begin with the raw amino-acid sequence, 542 residues long: Chaperonin GroEL 1 (542 aa).

ATP contacts are provided by residues Thr30–Pro33, Lys51, Asp87–Thr91, Gly415, and Asp496.

The protein belongs to the chaperonin (HSP60) family. Forms a cylinder of 14 subunits composed of two heptameric rings stacked back-to-back. Interacts with the co-chaperonin GroES.

The protein localises to the cytoplasm. The catalysed reaction is ATP + H2O + a folded polypeptide = ADP + phosphate + an unfolded polypeptide.. In terms of biological role, together with its co-chaperonin GroES, plays an essential role in assisting protein folding. The GroEL-GroES system forms a nano-cage that allows encapsulation of the non-native substrate proteins and provides a physical environment optimized to promote and accelerate protein folding. The polypeptide is Chaperonin GroEL 1 (Sinorhizobium fredii (strain NBRC 101917 / NGR234)).